Consider the following 141-residue polypeptide: Large ribosomal subunit protein uL11 (141 aa).

The protein belongs to the universal ribosomal protein uL11 family. In terms of assembly, part of the ribosomal stalk of the 50S ribosomal subunit. Interacts with L10 and the large rRNA to form the base of the stalk. L10 forms an elongated spine to which L12 dimers bind in a sequential fashion forming a multimeric L10(L12)X complex. Post-translationally, one or more lysine residues are methylated.

In terms of biological role, forms part of the ribosomal stalk which helps the ribosome interact with GTP-bound translation factors. This is Large ribosomal subunit protein uL11 from Moorella thermoacetica (strain ATCC 39073 / JCM 9320).